The sequence spans 61 residues: Tubulin alpha-4 chain (61 aa).

Gln11 serves as a coordination point for GTP. The disordered stretch occupies residues 35–61 (QMPGDKTIGGGDAEFDEGEDGDEGDEY). The residue at position 40 (Lys40) is an N6-acetyllysine. Residues 47-61 (AEFDEGEDGDEGDEY) are compositionally biased toward acidic residues.

Belongs to the tubulin family. In terms of assembly, dimer of alpha and beta chains. A typical microtubule is a hollow water-filled tube with an outer diameter of 25 nm and an inner diameter of 15 nM. Alpha-beta heterodimers associate head-to-tail to form protofilaments running lengthwise along the microtubule wall with the beta-tubulin subunit facing the microtubule plus end conferring a structural polarity. Microtubules usually have 13 protofilaments but different protofilament numbers can be found in some organisms and specialized cells. Requires Mg(2+) as cofactor. Post-translationally, undergoes a tyrosination/detyrosination cycle, the cyclic removal and re-addition of a C-terminal tyrosine residue by the enzymes tubulin tyrosine carboxypeptidase (TTCP) and tubulin tyrosine ligase (TTL), respectively. In terms of processing, acetylation of alpha chains at Lys-40 stabilizes microtubules and affects affinity and processivity of microtubule motors. This modification has a role in multiple cellular functions, ranging from cell motility, cell cycle progression or cell differentiation to intracellular trafficking and signaling.

It is found in the cytoplasm. The protein resides in the cytoskeleton. It catalyses the reaction GTP + H2O = GDP + phosphate + H(+). In terms of biological role, tubulin is the major constituent of microtubules, a cylinder consisting of laterally associated linear protofilaments composed of alpha- and beta-tubulin heterodimers. Microtubules grow by the addition of GTP-tubulin dimers to the microtubule end, where a stabilizing cap forms. Below the cap, tubulin dimers are in GDP-bound state, owing to GTPase activity of alpha-tubulin. The chain is Tubulin alpha-4 chain (TUBA4) from Zea mays (Maize).